Consider the following 296-residue polypeptide: Thymidylate synthase (296 aa).

DUMP-binding positions include Arg-24 and 151-152; that span reads RR. The active-site Nucleophile is the Cys-171. DUMP-binding positions include 197–200, Asn-208, and 238–240; these read RSAD and HVY. Asp-200 provides a ligand contact to (6R)-5,10-methylene-5,6,7,8-tetrahydrofolate.

Belongs to the thymidylate synthase family. Homodimer.

The enzyme catalyses dUMP + (6R)-5,10-methylene-5,6,7,8-tetrahydrofolate = 7,8-dihydrofolate + dTMP. It functions in the pathway pyrimidine metabolism; dTTP biosynthesis. This is Thymidylate synthase (tms1) from Agaricus bisporus (White button mushroom).